Reading from the N-terminus, the 481-residue chain is MSIQVHDTLTAQKRELVPLEPGKLRLYVCGPTVYDYSHLGHARCYVVWDVVVRHLRARGLEVRFVRNFTDVDDKIIQRANERGEDPIALASRFADAFHEDMDALGNLRPDVEPRVSGHIPEIVALIARLVERGFAYAPGNGDVYYAVRKFPEYGRLSKRNLDDLIAGARVEPGEAKRDPLDFALWKAAKPGEPAWDSPWGKGRPGWHIECSAMTQKHLGAPIDLHAGGKDLVFPHHTNEIAQSVAATSDGLHAEDFARYWMHNGFVQIDDEKMSKSLGNFFTIRDVLARFDGEALRFFLLGTHYRRDFNFSDQVLAEAERRLSALYETVEKAERLGAGVEPGAEPAFVERARAALDDDFNTPQVLGIVAEAFTEANALADRKGKKSPEEKARLAAFARGARAVGAVLGILGRPPAQALSAIRDRAAARRGIDGSEVERLIAERAAARAAKDFARSDAIRDGLLARGVVLMDGPQGTTWKVE.

Position 29 (Cys-29) interacts with Zn(2+). Residues Pro-31–His-41 carry the 'HIGH' region motif. Positions 210, 235, and 239 each coordinate Zn(2+). The 'KMSKS' region signature appears at Lys-272–Ser-276. Lys-275 serves as a coordination point for ATP.

The protein belongs to the class-I aminoacyl-tRNA synthetase family. As to quaternary structure, monomer. The cofactor is Zn(2+).

The protein localises to the cytoplasm. The catalysed reaction is tRNA(Cys) + L-cysteine + ATP = L-cysteinyl-tRNA(Cys) + AMP + diphosphate. The polypeptide is Cysteine--tRNA ligase (Anaeromyxobacter dehalogenans (strain 2CP-C)).